Here is a 188-residue protein sequence, read N- to C-terminus: ATP synthase subunit b 1 (188 aa).

The helical transmembrane segment at 35–55 threads the bilayer; the sequence is VHFSSHFFWLAISFGFFYLFI.

It belongs to the ATPase B chain family. As to quaternary structure, F-type ATPases have 2 components, F(1) - the catalytic core - and F(0) - the membrane proton channel. F(1) has five subunits: alpha(3), beta(3), gamma(1), delta(1), epsilon(1). F(0) has three main subunits: a(1), b(2) and c(10-14). The alpha and beta chains form an alternating ring which encloses part of the gamma chain. F(1) is attached to F(0) by a central stalk formed by the gamma and epsilon chains, while a peripheral stalk is formed by the delta and b chains.

The protein localises to the cell inner membrane. Its function is as follows. F(1)F(0) ATP synthase produces ATP from ADP in the presence of a proton or sodium gradient. F-type ATPases consist of two structural domains, F(1) containing the extramembraneous catalytic core and F(0) containing the membrane proton channel, linked together by a central stalk and a peripheral stalk. During catalysis, ATP synthesis in the catalytic domain of F(1) is coupled via a rotary mechanism of the central stalk subunits to proton translocation. In terms of biological role, component of the F(0) channel, it forms part of the peripheral stalk, linking F(1) to F(0). This Bartonella tribocorum (strain CIP 105476 / IBS 506) protein is ATP synthase subunit b 1.